The following is a 631-amino-acid chain: Phosphomethylpyrimidine synthase (631 aa).

Substrate-binding positions include N239, M268, Y297, H333, 353–355 (SRG), 394–397 (DGLR), and E433. Zn(2+) is bound at residue H437. Y460 is a substrate binding site. H501 contributes to the Zn(2+) binding site. C581, C584, and C589 together coordinate [4Fe-4S] cluster.

Belongs to the ThiC family. In terms of assembly, homodimer. [4Fe-4S] cluster is required as a cofactor.

It carries out the reaction 5-amino-1-(5-phospho-beta-D-ribosyl)imidazole + S-adenosyl-L-methionine = 4-amino-2-methyl-5-(phosphooxymethyl)pyrimidine + CO + 5'-deoxyadenosine + formate + L-methionine + 3 H(+). It participates in cofactor biosynthesis; thiamine diphosphate biosynthesis. Catalyzes the synthesis of the hydroxymethylpyrimidine phosphate (HMP-P) moiety of thiamine from aminoimidazole ribotide (AIR) in a radical S-adenosyl-L-methionine (SAM)-dependent reaction. In Salmonella paratyphi A (strain AKU_12601), this protein is Phosphomethylpyrimidine synthase.